Here is a 360-residue protein sequence, read N- to C-terminus: F-box protein SKP2B (360 aa).

The F-box domain occupies isoleucine 25–lysine 76. LRR repeat units lie at residues asparagine 77–glutamine 99, lysine 101–lysine 126, serine 127–glycine 152, cysteine 153–glycine 178, valine 180–tryptophan 205, cysteine 206–serine 231, cysteine 232–tyrosine 257, cysteine 258–glutamine 301, and cysteine 302–glycine 333.

In terms of biological role, component of SCF(SKP2B) E3 ubiquitin ligase complexes, which mediate the ubiquitination and subsequent proteasomal degradation of the cyclin-dependent kinase inhibitor KRP1. Does not interact with auxin. In Arabidopsis thaliana (Mouse-ear cress), this protein is F-box protein SKP2B (SKP2B).